A 357-amino-acid chain; its full sequence is Elongation factor Ts (357 aa).

An involved in Mg(2+) ion dislocation from EF-Tu region spans residues 82–85 (TDFV).

The protein belongs to the EF-Ts family.

It localises to the cytoplasm. Its function is as follows. Associates with the EF-Tu.GDP complex and induces the exchange of GDP to GTP. It remains bound to the aminoacyl-tRNA.EF-Tu.GTP complex up to the GTP hydrolysis stage on the ribosome. The polypeptide is Elongation factor Ts (Campylobacter jejuni subsp. jejuni serotype O:2 (strain ATCC 700819 / NCTC 11168)).